The sequence spans 391 residues: Inositol-tetrakisphosphate 1-kinase 2 (391 aa).

Residues K90 and K132 each coordinate 1D-myo-inositol 1,3,4-trisphosphate. ATP is bound by residues R167 and K217. Residues 178 to 384 (KLSDCSGSLF…FFQNLAQVKY (207 aa)) enclose the ATP-grasp domain. 1D-myo-inositol 1,3,4-trisphosphate contacts are provided by H228 and K260. ATP contacts are provided by residues 249-260 (QEFVNHGGVMFK) and S275. 3 residues coordinate Mg(2+): D340, D355, and N357. Residue N357 participates in 1D-myo-inositol 1,3,4-trisphosphate binding.

The protein belongs to the ITPK1 family. In terms of assembly, monomer. The cofactor is Mg(2+). As to expression, expressed in seedling roots, cotyledons, rosette leaves, cauline leaves, stems, flowers, siliques and seeds.

It catalyses the reaction 1D-myo-inositol 3,4,5,6-tetrakisphosphate + ATP = 1D-myo-inositol 1,3,4,5,6-pentakisphosphate + ADP + H(+). The catalysed reaction is 1D-myo-inositol 1,3,4-trisphosphate + ATP = 1D-myo-inositol 1,3,4,5-tetrakisphosphate + ADP + H(+). It carries out the reaction 1D-myo-inositol 1,3,4-trisphosphate + ATP = 1D-myo-inositol 1,3,4,6-tetrakisphosphate + ADP + H(+). Functionally, kinase that can phosphorylate various inositol polyphosphate such as Ins(3,4,5,6)P4 or Ins(1,3,4)P3. Phosphorylates Ins(3,4,5,6)P4 to form InsP5. This reaction is thought to have regulatory importance, since Ins(3,4,5,6)P4 is an inhibitor of plasma membrane Ca(2+)-activated Cl(-) channels, while Ins(1,3,4,5,6)P5 is not. Also phosphorylates Ins(1,3,4)P3 or a racemic mixture of Ins(1,4,6)P3 and Ins(3,4,6)P3 to form InsP4. Ins(1,3,4,6)P4 is an essential molecule in the hexakisphosphate (InsP6) pathway. Plays a role in seed coat development and lipid polyester barrier formation. This is Inositol-tetrakisphosphate 1-kinase 2 (ITPK2) from Arabidopsis thaliana (Mouse-ear cress).